We begin with the raw amino-acid sequence, 158 residues long: Transcription antitermination protein NusB (158 aa).

The span at 1–12 (MKRVEKRAEKQG) shows a compositional bias: basic and acidic residues. Residues 1-20 (MKRVEKRAEKQGRGTARKSR) form a disordered region.

The protein belongs to the NusB family.

Its function is as follows. Involved in transcription antitermination. Required for transcription of ribosomal RNA (rRNA) genes. Binds specifically to the boxA antiterminator sequence of the ribosomal RNA (rrn) operons. In Nitrosospira multiformis (strain ATCC 25196 / NCIMB 11849 / C 71), this protein is Transcription antitermination protein NusB.